Reading from the N-terminus, the 136-residue chain is Acyl carrier protein 1, chloroplastic (136 aa).

Residues 1–52 (MASVTGTSISMASFKASLAPSRVSNLRSVSLPIKGKSFAPLRMRSARFVVCC) constitute a chloroplast transit peptide. Residues 56 to 131 (PETVEKVCAI…DAADLIEKLI (76 aa)) enclose the Carrier domain. At Ser91 the chain carries O-(pantetheine 4'-phosphoryl)serine.

It belongs to the acyl carrier protein (ACP) family. In terms of processing, 4'-phosphopantetheine is transferred from CoA to a specific serine of apo-ACP by acpS. This modification is essential for activity because fatty acids are bound in thioester linkage to the sulfhydryl of the prosthetic group.

The protein resides in the plastid. Its subcellular location is the chloroplast. Its pathway is lipid metabolism; fatty acid biosynthesis. In terms of biological role, carrier of the growing fatty acid chain in fatty acid biosynthesis. The sequence is that of Acyl carrier protein 1, chloroplastic (ACP1) from Casuarina glauca (Swamp oak).